Consider the following 156-residue polypeptide: MTKMNVESFNLDHTKVVAPFVRLAGTMEGLNGDVIKKYDIRFKQPNKEHMEMPGLHSLEHLMAENIRNHTDKVVDLSPMGCQTGFYVSFINHDDYEDVLNIIEKTLNDVLEATEVPACNEVQCGWAASHSLEGAKEIAQAFLDKRNQWSDIFGEGK.

Residues His-56, His-60, and Cys-123 each contribute to the Fe cation site.

Belongs to the LuxS family. Homodimer. It depends on Fe cation as a cofactor.

It catalyses the reaction S-(5-deoxy-D-ribos-5-yl)-L-homocysteine = (S)-4,5-dihydroxypentane-2,3-dione + L-homocysteine. In terms of biological role, involved in the synthesis of autoinducer 2 (AI-2) which is secreted by bacteria and is used to communicate both the cell density and the metabolic potential of the environment. The regulation of gene expression in response to changes in cell density is called quorum sensing. Catalyzes the transformation of S-ribosylhomocysteine (RHC) to homocysteine (HC) and 4,5-dihydroxy-2,3-pentadione (DPD). The polypeptide is S-ribosylhomocysteine lyase (Staphylococcus haemolyticus (strain JCSC1435)).